The primary structure comprises 651 residues: LEAF RUST 10 DISEASE-RESISTANCE LOCUS RECEPTOR-LIKE PROTEIN KINASE-like 1.2 (651 aa).

A signal peptide spans 1 to 26 (MNPSTPSLLYTSIFFYFTIIATQTLS). Topologically, residues 27–264 (LDPKFKACEP…NDKRRRVIVK (238 aa)) are extracellular. 7 N-linked (GlcNAc...) asparagine glycosylation sites follow: Asn88, Asn114, Asn130, Asn136, Asn155, Asn193, and Asn213. A helical membrane pass occupies residues 265-285 (VLIGASAAVVGLIAASIFWYV). The Cytoplasmic portion of the chain corresponds to 286–651 (YHRRKTKSYR…DSVIVKWDSK (366 aa)). The 273-residue stretch at 341–613 (FDPSKELGDG…PCMSHVQDTL (273 aa)) folds into the Protein kinase domain. ATP is bound by residues 347-355 (LGDGGFGTV) and Lys369. Tyr415 is modified (phosphotyrosine). Asp465 acts as the Proton acceptor in catalysis. Residue Ser498 is modified to Phosphoserine. Phosphothreonine is present on residues Thr499 and Thr504. Residue Tyr512 is modified to Phosphotyrosine.

The protein belongs to the protein kinase superfamily. Ser/Thr protein kinase family.

It is found in the cell membrane. Its subcellular location is the membrane. It catalyses the reaction L-seryl-[protein] + ATP = O-phospho-L-seryl-[protein] + ADP + H(+). The enzyme catalyses L-threonyl-[protein] + ATP = O-phospho-L-threonyl-[protein] + ADP + H(+). Its function is as follows. Probable receptor-like serine/threonine-protein kinase involved in abscisic acid (ABA) signaling. Acts as a positive regulator of abiotic stress response. The sequence is that of LEAF RUST 10 DISEASE-RESISTANCE LOCUS RECEPTOR-LIKE PROTEIN KINASE-like 1.2 from Arabidopsis thaliana (Mouse-ear cress).